The primary structure comprises 237 residues: Aspartate/glutamate leucyltransferase (237 aa).

The protein belongs to the R-transferase family. Bpt subfamily.

It localises to the cytoplasm. It carries out the reaction N-terminal L-glutamyl-[protein] + L-leucyl-tRNA(Leu) = N-terminal L-leucyl-L-glutamyl-[protein] + tRNA(Leu) + H(+). It catalyses the reaction N-terminal L-aspartyl-[protein] + L-leucyl-tRNA(Leu) = N-terminal L-leucyl-L-aspartyl-[protein] + tRNA(Leu) + H(+). In terms of biological role, functions in the N-end rule pathway of protein degradation where it conjugates Leu from its aminoacyl-tRNA to the N-termini of proteins containing an N-terminal aspartate or glutamate. In Shewanella amazonensis (strain ATCC BAA-1098 / SB2B), this protein is Aspartate/glutamate leucyltransferase.